Here is a 393-residue protein sequence, read N- to C-terminus: Lipid-A-disaccharide synthase (393 aa).

Belongs to the LpxB family.

The catalysed reaction is a lipid X + a UDP-2-N,3-O-bis[(3R)-3-hydroxyacyl]-alpha-D-glucosamine = a lipid A disaccharide + UDP + H(+). It functions in the pathway bacterial outer membrane biogenesis; LPS lipid A biosynthesis. Functionally, condensation of UDP-2,3-diacylglucosamine and 2,3-diacylglucosamine-1-phosphate to form lipid A disaccharide, a precursor of lipid A, a phosphorylated glycolipid that anchors the lipopolysaccharide to the outer membrane of the cell. In Granulibacter bethesdensis (strain ATCC BAA-1260 / CGDNIH1), this protein is Lipid-A-disaccharide synthase.